The primary structure comprises 166 residues: Large ribosomal subunit protein uL10 (166 aa).

This sequence belongs to the universal ribosomal protein uL10 family. As to quaternary structure, part of the ribosomal stalk of the 50S ribosomal subunit. The N-terminus interacts with L11 and the large rRNA to form the base of the stalk. The C-terminus forms an elongated spine to which L12 dimers bind in a sequential fashion forming a multimeric L10(L12)X complex.

Its function is as follows. Forms part of the ribosomal stalk, playing a central role in the interaction of the ribosome with GTP-bound translation factors. This is Large ribosomal subunit protein uL10 from Bacillus mycoides (strain KBAB4) (Bacillus weihenstephanensis).